The chain runs to 239 residues: Proteasome activator complex subunit 2 (239 aa).

The residue at position 2 (alanine 2) is an N-acetylalanine. Serine 10 carries the post-translational modification Phosphoserine. Residues 65–87 (DIPIPDPPPKDDEMETDKQEKKE) form a disordered region. The segment covering 72–87 (PPKDDEMETDKQEKKE) has biased composition (basic and acidic residues).

The protein belongs to the PA28 family. Heterodimer of PSME1 and PSME2, which forms a hexameric ring.

In terms of biological role, implicated in immunoproteasome assembly and required for efficient antigen processing. The PA28 activator complex enhances the generation of class I binding peptides by altering the cleavage pattern of the proteasome. This Mus musculus (Mouse) protein is Proteasome activator complex subunit 2 (Psme2).